We begin with the raw amino-acid sequence, 733 residues long: E3 ubiquitin-protein ligase COP1 (733 aa).

The disordered stretch occupies residues 1–43 (MSGSRQAGSGSAGTSPGSSAASSVTSASSSLSSSPSPPSVAAS). The short motif at 111 to 115 (SSRKR) is the Nuclear localization signal 1 element. The RING-type zinc finger occupies 138–176 (CPICFDMIEEAYMTKCGHSFCYKCIHQSLEDNNRCPKCN). The Nuclear localization signal 2 signature appears at 197 to 208 (KQKQRFEEKRFK). Residues 231–306 (DQDNLDLANV…RVEEMSGLYS (76 aa)) are a coiled coil. The Nuclear export signal motif lies at 237 to 247 (LANVNLMLELL). Residues 307-327 (PVSEDSTVPQFEAPSPSHSSI) form a disordered region. WD repeat units follow at residues 421–460 (NGSSIVSSIEFDRDCDYFAIAGVTKKIKVYEYGTVIQDAV), 470–510 (TCNS…RSKV), 513–553 (EHEK…SVAS), 555–595 (EAKA…QPIM), 599–637 (GHRKAVSYAKFVSGEEIVSASTDSQLKLWNVGKPYCLRS), 640–679 (GHINEKNFVGLASNGDYIACGSENNSLYLYYKGLSKTLLT), and 695–731 (EDDTNEFVSAVCWRALSDGESNVLIAANSQGTIKVLE). Residues 645–647 (KNF) form an interaction with TRIB1 region.

The protein belongs to the COP1 family. Homodimer. Homodimerization is mediated by the coiled coil domain. Component of the DCX DET1-COP1 ubiquitin ligase complex at least composed of RBX1, DET1, DDB1, CUL4A and COP1. Isoform 2 does not interact with CUL4A but still binds to RBX1, suggesting that the interaction may be mediated by another cullin protein. Isoform 1 and isoform 2 interact with CUL5 but not with CUL1, CUL2 not CUL3. Interacts with bZIP transcription factors JUN, JUNB and JUND but not with FOS, ATF2 nor XBP1. Interacts with p53 (TP53). Interacts with COPS6; this interaction stabilizes RFWD2 through reducing its auto-ubiquitination and decelerating its turnover rate. Interacts with SFN; this interaction leads to SFN degradation. Interacts with p53/TP53 and MTA1. Interacts with TRIB1 (via C-terminus) and TRIB2.

It localises to the nucleus speckle. The protein localises to the cytoplasm. The catalysed reaction is S-ubiquitinyl-[E2 ubiquitin-conjugating enzyme]-L-cysteine + [acceptor protein]-L-lysine = [E2 ubiquitin-conjugating enzyme]-L-cysteine + N(6)-ubiquitinyl-[acceptor protein]-L-lysine.. It participates in protein modification; protein ubiquitination. With respect to regulation, TRIB1 competes with substrates for RFWD2 binding. In terms of biological role, E3 ubiquitin-protein ligase that mediates ubiquitination and subsequent proteasomal degradation of target proteins. E3 ubiquitin ligases accept ubiquitin from an E2 ubiquitin-conjugating enzyme in the form of a thioester and then directly transfers the ubiquitin to targeted substrates. Involved in JUN ubiquitination and degradation. Directly involved in p53 (TP53) ubiquitination and degradation, thereby abolishing p53-dependent transcription and apoptosis. Ubiquitinates p53 independently of MDM2 or RCHY1. Probably mediates E3 ubiquitin ligase activity by functioning as the essential RING domain subunit of larger E3 complexes. In contrast, it does not constitute the catalytic RING subunit in the DCX DET1-COP1 complex that negatively regulates JUN, the ubiquitin ligase activity being mediated by RBX1. Involved in 14-3-3 protein sigma/SFN ubiquitination and proteasomal degradation, leading to AKT activation and promotion of cell survival. Ubiquitinates MTA1 leading to its proteasomal degradation. Upon binding to TRIB1, ubiquitinates CEBPA, which lacks a canonical COP1-binding motif. The chain is E3 ubiquitin-protein ligase COP1 from Mus musculus (Mouse).